The primary structure comprises 204 residues: Urease accessory protein UreG (204 aa).

A GTP-binding site is contributed by 11–18 (GPVGAGKT).

Belongs to the SIMIBI class G3E GTPase family. UreG subfamily. As to quaternary structure, homodimer. UreD, UreF and UreG form a complex that acts as a GTP-hydrolysis-dependent molecular chaperone, activating the urease apoprotein by helping to assemble the nickel containing metallocenter of UreC. The UreE protein probably delivers the nickel.

It localises to the cytoplasm. Its function is as follows. Facilitates the functional incorporation of the urease nickel metallocenter. This process requires GTP hydrolysis, probably effectuated by UreG. This chain is Urease accessory protein UreG, found in Staphylococcus saprophyticus subsp. saprophyticus (strain ATCC 15305 / DSM 20229 / NCIMB 8711 / NCTC 7292 / S-41).